A 336-amino-acid polypeptide reads, in one-letter code: MTLAYIPSPTISQFSIGPVTIHFYALCILLGIVLAVWMTTVHWKRYGGNFDQILDITLVAVPSGIIGARIYHIITTPERFFGPTGDWVEMFRIWNGGLGIWGGVLLGALAAWAWCRHKHYPMALLGDAVAPGLLVAQAVGRLGNWFNQELYGAPTTLPWGLKLNMEGSAIGHSEQCYDGATCPTGTLFHPTFLYEMIWNLIGAALIVFLGSKIMKKLKAGSLFAIYIMWYTVGRTWIEALRIDFAHEFLGVRINVWVSMAVFVLGVVAFIVIQQMGKSTELLAEKLRTVTEIELSLVEDGETGLPTAKANLTKTKDEITANDGSSVSYADDQSDNK.

The next 3 membrane-spanning stretches (helical) occupy residues 16–36 (IGPV…VLAV), 53–73 (ILDI…IYHI), and 93–113 (IWNG…AAWA). Arg141 is an a 1,2-diacyl-sn-glycero-3-phospho-(1'-sn-glycerol) binding site. 3 consecutive transmembrane segments (helical) span residues 190–210 (PTFL…VFLG), 220–240 (GSLF…IEAL), and 253–273 (INVW…IVIQ).

This sequence belongs to the Lgt family.

The protein localises to the cell membrane. The enzyme catalyses L-cysteinyl-[prolipoprotein] + a 1,2-diacyl-sn-glycero-3-phospho-(1'-sn-glycerol) = an S-1,2-diacyl-sn-glyceryl-L-cysteinyl-[prolipoprotein] + sn-glycerol 1-phosphate + H(+). It participates in protein modification; lipoprotein biosynthesis (diacylglyceryl transfer). In terms of biological role, catalyzes the transfer of the diacylglyceryl group from phosphatidylglycerol to the sulfhydryl group of the N-terminal cysteine of a prolipoprotein, the first step in the formation of mature lipoproteins. In Bifidobacterium adolescentis (strain ATCC 15703 / DSM 20083 / NCTC 11814 / E194a), this protein is Phosphatidylglycerol--prolipoprotein diacylglyceryl transferase.